Reading from the N-terminus, the 919-residue chain is uncharacterized protein (919 aa).

Residues 1–15 (MEALILLSSQQSGSI) are compositionally biased toward low complexity. Disordered stretches follow at residues 1–167 (MEAL…DLEN), 179–312 (RFKP…STPS), 415–491 (HIYE…RLSL), 553–739 (QQQQ…TIKP), 751–863 (THNE…NNII), and 883–906 (LNINHQDGPNSASSTPRLPTDHIN). Over residues 16 to 25 (KNNCASTSDI) the composition is skewed to polar residues. Low complexity-rich tracts occupy residues 34–75 (IVIV…SSSS), 96–107 (SSPSSSPNTPKT), and 141–153 (TPTTTSTSTTPIK). The segment covering 154–167 (PVKDPKEKEKDLEN) has biased composition (basic and acidic residues). Residues 186 to 292 (NNTNNNNNIN…QQSSPTSSQT (107 aa)) are compositionally biased toward low complexity. Polar residues predominate over residues 420-433 (PNENNNGGSFQKPN). Low complexity-rich tracts occupy residues 450–471 (GVSGSPSHSPRVSQSPRVPSHP), 553–564 (QQQQQQQQQSSS), 573–589 (SQPQNSSSPRQPSQTPQ), and 618–635 (HMPQSPHMPHSPHLMPHS). Residues 678-695 (YGSSPNLNGGKGSNNFLQ) show a composition bias toward polar residues. Low complexity predominate over residues 712-723 (SSVDSYSNSSPT). The segment covering 754-768 (ENYMSSPRQPLSPHN) has biased composition (polar residues). Basic and acidic residues predominate over residues 785–797 (PHEHCNYIDKNDE). Over residues 798 to 863 (YYSNNNNNNN…NNNNNNNNII (66 aa)) the composition is skewed to low complexity. Positions 883–899 (LNINHQDGPNSASSTPR) are enriched in polar residues.

This is an uncharacterized protein from Dictyostelium discoideum (Social amoeba).